Consider the following 351-residue polypeptide: 5-deoxyribose 1-phosphate isomerase (351 aa).

Residues 48–50 (RGA), R91, and Q198 each bind substrate. D239 serves as the catalytic Proton donor. Position 249 to 250 (249 to 250 (NK)) interacts with substrate.

It belongs to the EIF-2B alpha/beta/delta subunits family. DrdI subfamily.

The catalysed reaction is 5-deoxy-alpha-D-ribose 1-phosphate = 5-deoxy-D-ribulose 1-phosphate. Its pathway is carbohydrate degradation. Catalyzes the isomerization of 5-deoxy-alpha-D-ribose 1-phosphate to 5-deoxy-D-ribulose 1-phosphate, as part of a 5-deoxyribose salvage pathway that recycles this toxic radical SAM enzyme by-product to mainstream metabolites. This is 5-deoxyribose 1-phosphate isomerase from Moorella thermoacetica (strain ATCC 39073 / JCM 9320).